We begin with the raw amino-acid sequence, 757 residues long: Transferrin receptor protein 1 (757 aa).

Topologically, residues 1 to 67 (MMDQARSAIS…KHRRLNGRLC (67 aa)) are cytoplasmic. The tract at residues 1–67 (MMDQARSAIS…KHRRLNGRLC (67 aa)) is mediates interaction with SH3BP4. Ser-10 and Ser-19 each carry phosphoserine. Phosphotyrosine is present on Tyr-20. The Endocytosis signal signature appears at 20–23 (YTRF). Thr-21 carries the phosphothreonine modification. Phosphoserine is present on Ser-24. A Stop-transfer sequence motif is present at residues 58–61 (KHRR). Cys-67 is lipidated: S-palmitoyl cysteine. The helical; Signal-anchor for type II membrane protein transmembrane segment at 68–88 (FGTIAVVIFFLIGFMIGYLGY) threads the bilayer. The Extracellular portion of the chain corresponds to 89–757 (CKRTEQKDCV…GDIWDIDNEF (669 aa)). O-linked (GalNAc...) threonine glycosylation occurs at Thr-103. The 91-residue stretch at 220-310 (SKATTVSGKL…GTGDPYTPGF (91 aa)) folds into the PA domain. 2 N-linked (GlcNAc...) asparagine glycosylation sites follow: Asn-248 and Asn-314. Residues 566–757 (NLDTYEKLIQ…GDIWDIDNEF (192 aa)) are ligand-binding. The Cell attachment site motif lies at 643–645 (RGD). N-linked (GlcNAc...) asparagine glycans are attached at residues Asn-719 and Asn-724.

This sequence belongs to the peptidase M28 family. M28B subfamily. In terms of assembly, homodimer; disulfide-linked. Binds one transferrin molecule per subunit. Interacts with SH3BP4. Interacts with STEAP3; facilitates TFRC endocytosis in erythroid precursor cells. Post-translationally, stearoylated by ZDHHC6 which inhibits TFRC-mediated activation of the JNK pathway and promotes mitochondrial fragmentation. Stearoylation does not affect iron uptake. In terms of processing, N- and O-glycosylated, phosphorylated and palmitoylated.

Its subcellular location is the cell membrane. The protein localises to the melanosome. In terms of biological role, cellular uptake of iron occurs via receptor-mediated endocytosis of ligand-occupied transferrin receptor into specialized endosomes. Endosomal acidification leads to iron release. The apotransferrin-receptor complex is then recycled to the cell surface with a return to neutral pH and the concomitant loss of affinity of apotransferrin for its receptor. Transferrin receptor is necessary for development of erythrocytes and the nervous system. Positively regulates T and B cell proliferation through iron uptake. Acts as a lipid sensor that regulates mitochondrial fusion by regulating activation of the JNK pathway. When dietary levels of stearate (C18:0) are low, promotes activation of the JNK pathway, resulting in HUWE1-mediated ubiquitination and subsequent degradation of the mitofusin MFN2 and inhibition of mitochondrial fusion. When dietary levels of stearate (C18:0) are high, TFRC stearoylation inhibits activation of the JNK pathway and thus degradation of the mitofusin MFN2. Mediates uptake of NICOL1 into fibroblasts where it may regulate extracellular matrix production. This is Transferrin receptor protein 1 (TFRC) from Cricetulus griseus (Chinese hamster).